The chain runs to 528 residues: Na(+)/H(+) antiporter NhaB (528 aa).

A run of 11 helical transmembrane segments spans residues 10–30, 63–83, 96–116, 131–165, 204–224, 240–260, 305–325, 359–379, 391–411, 449–469, and 476–496; these read IGNFLGNSPKWYKIAILSFLI, YPLQPGGLLAIEAVAIGMTSA, VLLLLVFMVAGIYFMKQLLLF, VSLMFCLTSAFLSAFLDALTVIAVIIAVAVGFYAI, LLMHAGVGTALGGVCTMVGEP, FVVRMSPVTVPVLIAGILTCL, VLVGVWLIAGLALHLASVGLV, LAVFFAVVAVIIDQHLFAPVI, LVIFYIANGLLSMVSDNVFVG, ATPNGQAAFLFLLTSALAPLI, and MVWMALPYTIVLSVVGVLAIE.

Belongs to the NhaB Na(+)/H(+) (TC 2.A.34) antiporter family.

Its subcellular location is the cell inner membrane. The enzyme catalyses 2 Na(+)(in) + 3 H(+)(out) = 2 Na(+)(out) + 3 H(+)(in). Functionally, na(+)/H(+) antiporter that extrudes sodium in exchange for external protons. In Shewanella sp. (strain W3-18-1), this protein is Na(+)/H(+) antiporter NhaB.